A 230-amino-acid chain; its full sequence is MYSIKMRSSNQDIHISGAETICEFDKIEQTVQRFYNKGFFHENGQPDFLNIKIQKIMEPIKQIKALQIIEDDKANLQHLTQKCGVTEQALNQGMTYIKNETVYTGAIILSAISGKRLDSFGHRGIRATHFSFEDINNKGDLNERVTDALAIASCINAHPYVKGELCVSDDLTYTTGYFASAKIGYHRLFDIKPVNTRYGGRIIFVDDRIDLNHYILFLESTPKQVVYETV.

Belongs to the BioW family. As to quaternary structure, homodimer. Mg(2+) serves as cofactor.

It carries out the reaction heptanedioate + ATP + CoA = 6-carboxyhexanoyl-CoA + AMP + diphosphate. The protein operates within metabolic intermediate metabolism; pimeloyl-CoA biosynthesis; pimeloyl-CoA from pimelate: step 1/1. In terms of biological role, catalyzes the transformation of pimelate into pimeloyl-CoA with concomitant hydrolysis of ATP to AMP. The protein is 6-carboxyhexanoate--CoA ligase of Staphylococcus aureus (strain MRSA252).